The following is a 245-amino-acid chain: Proteasome subunit alpha type-7-1B (245 aa).

The protein belongs to the peptidase T1A family. The 26S proteasome consists of a 20S proteasome core and two 19S regulatory subunits. The 20S proteasome core is composed of 28 subunits that are arranged in four stacked rings, resulting in a barrel-shaped structure. The two end rings are each formed by seven alpha subunits, and the two central rings are each formed by seven beta subunits. The catalytic chamber with the active sites is on the inside of the barrel. In terms of tissue distribution, testis specific.

Its subcellular location is the cytoplasm. It is found in the nucleus. The proteasome is a multicatalytic proteinase complex which is characterized by its ability to cleave peptides with Arg, Phe, Tyr, Leu, and Glu adjacent to the leaving group at neutral or slightly basic pH. The proteasome has an ATP-dependent proteolytic activity. This is Proteasome subunit alpha type-7-1B (Pros28.1B) from Drosophila virilis (Fruit fly).